The sequence spans 221 residues: MDTLDELLPREKMLRSGIASLSDVELLALFLRTGTPGKDVITLAKEMLQRFGSLYGLLSADFAQFRGINGIGLAKFAQLKGIAELARRYYSVRMNEEDALLSPEMTLEFLQSQLTGEEREIFLVIFLDAQHRVLQHSRLFSGTLSHVEVHPREIVREAIKLNASAVILAHNHPSGCAEPSKADKHITDRVIKCCQFMDIRVLDHLIIGRGEYVSFAERGWI.

The region spanning 99–221 (ALLSPEMTLE…YVSFAERGWI (123 aa)) is the MPN domain. Positions 170, 172, and 183 each coordinate Zn(2+). A JAMM motif motif is present at residues 170–183 (HNHPSGCAEPSKAD).

This sequence belongs to the UPF0758 family. YicR subfamily.

The chain is UPF0758 protein YicR from Salmonella arizonae (strain ATCC BAA-731 / CDC346-86 / RSK2980).